We begin with the raw amino-acid sequence, 308 residues long: N-acetylmuramic acid 6-phosphate etherase (308 aa).

The region spanning 62 to 225 (ITDAFKVGGR…TTASMIRLGK (164 aa)) is the SIS domain. Glu90 functions as the Proton donor in the catalytic mechanism. Glu121 is an active-site residue.

The protein belongs to the GCKR-like family. MurNAc-6-P etherase subfamily. In terms of assembly, homodimer.

The enzyme catalyses N-acetyl-D-muramate 6-phosphate + H2O = N-acetyl-D-glucosamine 6-phosphate + (R)-lactate. It functions in the pathway amino-sugar metabolism; 1,6-anhydro-N-acetylmuramate degradation. It participates in amino-sugar metabolism; N-acetylmuramate degradation. The protein operates within cell wall biogenesis; peptidoglycan recycling. Functionally, specifically catalyzes the cleavage of the D-lactyl ether substituent of MurNAc 6-phosphate, producing GlcNAc 6-phosphate and D-lactate. Together with AnmK, is also required for the utilization of anhydro-N-acetylmuramic acid (anhMurNAc) either imported from the medium or derived from its own cell wall murein, and thus plays a role in cell wall recycling. The sequence is that of N-acetylmuramic acid 6-phosphate etherase from Vibrio campbellii (strain ATCC BAA-1116).